The primary structure comprises 341 residues: MGHRKLSSPRRGSAGLRPRKRSEELLPSPRSYPEVNLPNPVTLGFVGYKVGMTHIFMIDEDRSSSMFGKEIYVPVTVLETPPIYVLALRAYGLNNRGEHSVMGEVWGDLGDFGKFITRRIRGLKIDKEKKEHQLKDIESNLESVSYFRLLVSTQPHLIPALGKKTPDIVEVQIGGGNTKNQLEYGLKLLGNTLSVRDVFKEGQLMDIIGVTKGHGFQGVIKRYGVQELPRWHKHRKGSRKVGTKGPSLGTPSYVPQPGQMGFHRRTEYNKRILKISDDTKLINPKGGFVRYGLVKNTYLLVQGSTIGSIKRPLFLRYPIRPYSAQLPVPKVTYVDVNSKQG.

2 disordered regions span residues 1–31 (MGHRKLSSPRRGSAGLRPRKRSEELLPSPRS) and 234–261 (HRKGSRKVGTKGPSLGTPSYVPQPGQMG).

It belongs to the universal ribosomal protein uL3 family. In terms of assembly, part of the 50S ribosomal subunit. Forms a cluster with proteins L14 and L24e.

Functionally, one of the primary rRNA binding proteins, it binds directly near the 3'-end of the 23S rRNA, where it nucleates assembly of the 50S subunit. The sequence is that of Large ribosomal subunit protein uL3 from Metallosphaera sedula (strain ATCC 51363 / DSM 5348 / JCM 9185 / NBRC 15509 / TH2).